The primary structure comprises 191 residues: dCTP deaminase (191 aa).

DCTP contacts are provided by residues 112 to 117 (KSTYAR), 136 to 138 (TLE), glutamine 157, tyrosine 173, and glutamine 183. Glutamate 138 acts as the Proton donor/acceptor in catalysis.

It belongs to the dCTP deaminase family. As to quaternary structure, homotrimer.

It carries out the reaction dCTP + H2O + H(+) = dUTP + NH4(+). Its pathway is pyrimidine metabolism; dUMP biosynthesis; dUMP from dCTP (dUTP route): step 1/2. In terms of biological role, catalyzes the deamination of dCTP to dUTP. The protein is dCTP deaminase of Xylella fastidiosa (strain 9a5c).